The following is a 641-amino-acid chain: Protein TIC 62, chloroplastic (641 aa).

Residues 1-63 constitute a chloroplast transit peptide; the sequence is MEGTCFLRGQ…LSLRASGPIR (63 aa). Alanine 64 bears the N-acetylalanine mark. An NADP(+)-binding site is contributed by 84-113; that stretch reads VFVAGATGKVGSRTVRELLKLGFRVRAGVR. Positions 328–641 are disordered; it reads SKRPYVPPPK…SPLPSPVTNH (314 aa). Over residues 359-372 the composition is skewed to basic and acidic residues; it reads APKEDEAPPKEKNV. 2 tandem repeats follow at residues 376–397 and 444–465. The interval 376–638 is 4 X 22 AA approximate repeats; it reads PLSPYASYED…PPTSPLPSPV (263 aa). Residues 393–402 are compositionally biased toward low complexity; the sequence is IPNSTTSVSP. Basic and acidic residues predominate over residues 435–444; the sequence is KQVEEKKERP. Residues 485 to 528 show a composition bias toward low complexity; the sequence is SSTVAKTVTETAVATSVTETSVATSVPETAVATSVTETAAPATS. Copy 3 of the repeat occupies 532–553; it reads PLSPYAIYADLKPPTSPTPAST. Residues 599–612 show a composition bias toward polar residues; that stretch reads AIDTSLASGDNTAQ. Repeat 4 spans residues 617-638; sequence PLSPYTMYADMKPPTSPLPSPV. Pro residues predominate over residues 630–641; it reads PTSPLPSPVTNH.

In terms of assembly, part of the Tic complex. Interacts with TIC110 and TIC55. Interacts with LFNR1 and LFNR2. Component of high molecular weight thylakoid LFNRs-containing protein complexes containing LIR1, LFNR1, LFNR2, TIC62 and TROL proteins. Expressed in cotyledons and leaves, but not in roots.

It is found in the plastid. It localises to the chloroplast inner membrane. Its subcellular location is the chloroplast stroma. The protein resides in the chloroplast thylakoid. Functionally, involved in protein precursor import into chloroplasts. Part of the redox regulon consisting of TIC32, TIC 55 and TIC62. Acts as a membrane anchor of LFNR1 and LFNR2. Has a NADPH-dependent dehydrogenase activity, but only after preincubation with lipids. This chain is Protein TIC 62, chloroplastic, found in Arabidopsis thaliana (Mouse-ear cress).